The chain runs to 423 residues: Major royal jelly protein 9 (423 aa).

The N-terminal stretch at 1–20 (MSFNIWWLILYFSIVCQAKA) is a signal peptide. N-linked (GlcNAc...) asparagine glycans are attached at residues Asn110, Asn118, Asn177, Asn196, and Asn345.

Belongs to the major royal jelly protein family. In terms of tissue distribution, expressed at very low levels in the hypopharyngeal glands of adult worker bees (at protein level); expression peaks at 12 days post eclosion. Secreted into bee venom in the sting apparatus (at protein level). Expressed in the brains of adult worker bees peaking at 12 days post eclosion (at protein level). Expressed in the spermatheca of adult queen bees (at protein level); expression levels are higher in mated queens than in virgin queens. Along with Mrjp8 expressed at very low levels in the head of worker bees compared to other major royal jelly proteins.

The protein resides in the secreted. Its function is as follows. Component of bee sting venom. Component of royal jelly, a substance produced in the hypopharyngeal gland containing proteins, free amino acids, fatty acids, sugars and other nutrients, which is fed to developing larvae by worker nurse bees; may be present only at trace levels. All larvae are fed some royal jelly (also known as worker jelly) early in their development but it forms the principal source of nutrition for larvae destined to become queen bees. Produced in the spermatheca of adult queen bees, along with other major royal jelly proteins, where it may act as a nutrient supply for sperm stored by mated queens, or be involved in energy metabolism. The polypeptide is Major royal jelly protein 9 (Apis mellifera (Honeybee)).